The chain runs to 266 residues: Gasdermin bGSDM (266 aa).

The next 4 membrane-spanning stretches (beta stranded) occupy residues 67-83 (LQQNSTVSFDGKAGVDI), 95-113 (KLRGNINADHINSLQISYQ), 162-179 (SFSVSAQNKNGQNIDLEA), and 187-203 (ADVNVGRSKKDEVLMEY).

Belongs to the bacterial gasdermin family. Monomer. In terms of assembly, forms large, homooligomeric ring-shaped pores when inserted in membranes.

It is found in the cytoplasm. The protein localises to the cell inner membrane. Its activity is regulated as follows. The full-length protein before cleavage is inactive: intramolecular interactions between the N-terminal domain and the C-terminal region mediate autoinhibition. The pyroptosis-like-inducing activity is carried by the released N-terminal domain (Gasdermin bGSDM, N-terminus). Its function is as follows. Precursor of a pore-forming protein involved in defense against bacteriophages. Expression of bGSDM and the neighboring protease gene (Gilli_2517) is not toxic in E.coli. Cleavage of this precursor by its dedicated protease releases the active moiety (gasdermin bGSDM, N-terminus) which inserts into membranes, forming pores and triggering cell death. In terms of biological role, pore-forming protein that causes membrane permeabilization via a pyroptosis-like activity. Makes ring-like pores when released. The sequence is that of Gasdermin bGSDM from Gillisia limnaea (strain DSM 15749 / LMG 21470 / R-8282).